The primary structure comprises 86 residues: UPF0473 protein Clos_1662 (86 aa).

This sequence belongs to the UPF0473 family.

The sequence is that of UPF0473 protein Clos_1662 from Alkaliphilus oremlandii (strain OhILAs) (Clostridium oremlandii (strain OhILAs)).